Consider the following 558-residue polypeptide: Arginine--tRNA ligase (558 aa).

Residues Pro-119–His-129 carry the 'HIGH' region motif.

It belongs to the class-I aminoacyl-tRNA synthetase family. As to quaternary structure, monomer.

It localises to the cytoplasm. The catalysed reaction is tRNA(Arg) + L-arginine + ATP = L-arginyl-tRNA(Arg) + AMP + diphosphate. This chain is Arginine--tRNA ligase, found in Lactobacillus johnsonii (strain CNCM I-12250 / La1 / NCC 533).